The primary structure comprises 397 residues: Argininosuccinate synthase (397 aa).

8–16 contacts ATP; sequence AYSGGLDTS. L-citrulline is bound by residues Tyr-86 and Ser-91. Gly-116 is an ATP binding site. Positions 118, 122, and 123 each coordinate L-aspartate. L-citrulline is bound at residue Asn-122. 5 residues coordinate L-citrulline: Arg-126, Ser-175, Ser-184, Glu-260, and Tyr-272.

The protein belongs to the argininosuccinate synthase family. Type 1 subfamily. As to quaternary structure, homotetramer.

It is found in the cytoplasm. It carries out the reaction L-citrulline + L-aspartate + ATP = 2-(N(omega)-L-arginino)succinate + AMP + diphosphate + H(+). The protein operates within amino-acid biosynthesis; L-arginine biosynthesis; L-arginine from L-ornithine and carbamoyl phosphate: step 2/3. The sequence is that of Argininosuccinate synthase from Clostridium botulinum (strain ATCC 19397 / Type A).